A 678-amino-acid chain; its full sequence is ATP-dependent RNA helicase DHX58 (678 aa).

Positions isoleucine 11–leucine 188 constitute a Helicase ATP-binding domain. Leucine 24–threonine 31 serves as a coordination point for ATP. The DECH box signature appears at aspartate 131–histidine 134. A Helicase C-terminal domain is found at lysine 350 to aspartate 514. Positions glutamate 489–glutamine 546 form a coiled coil. The 131-residue stretch at glutamine 539–alanine 669 folds into the RLR CTR domain. Residues cysteine 556, cysteine 559, cysteine 612, and cysteine 615 each coordinate Zn(2+). The interval valine 572–valine 655 is RNA-binding.

The protein belongs to the helicase family. RLR subfamily. Monomer in the absence of dsRNA. Homodimer in the presence of dsRNA. Interacts with RIGI (via CARD domain), MAVS/IPS1 and DDX60. Found in a complex with RIGI and IFIH1/MDA5. Interacts with ANKRD17. Directly interacts with ATG5 and ATG12, either as ATG5 and ATG12 monomers or as ATG12-ATG5 conjugates. As to quaternary structure, (Microbial infection) Interacts (via helicase C-terminal domain) with non-structural protein V of paramyxoviruses including human parainfluenza 2 virus, human parainfluenza 5 virus, measles virus, mumps virus, hendra virus and nipah virus. In terms of tissue distribution, expressed in testis, nerve and spleen. Also expressed in the brain.

It is found in the cytoplasm. It catalyses the reaction ATP + H2O = ADP + phosphate + H(+). Its function is as follows. Acts as a regulator of RIGI and IFIH1/MDA5 mediated antiviral signaling. Cannot initiate antiviral signaling as it lacks the CARD domain required for activating MAVS/IPS1-dependent signaling events. Can have both negative and positive regulatory functions related to RIGI and IFIH1/MDA5 signaling and this role in regulating signaling may be complex and could probably depend on characteristics of the infecting virus or target cells, or both. Its inhibitory action on RIG-I signaling may involve the following mechanisms: competition with RIGI for binding to the viral RNA, binding to RIGI and inhibiting its dimerization and interaction with MAVS/IPS1, competing with IKBKE in its binding to MAVS/IPS1 thereby inhibiting activation of interferon regulatory factor 3 (IRF3). Its positive regulatory role may involve unwinding or stripping nucleoproteins of viral RNA thereby facilitating their recognition by RIGI and IFIH1/MDA5. Involved in the innate immune response to various RNA viruses and some DNA viruses such as poxviruses and coronavirus SARS-CoV-2, and also to the bacterial pathogen Listeria monocytogenes. Can bind both ssRNA and dsRNA, with a higher affinity for dsRNA. Shows a preference to 5'-triphosphorylated RNA, although it can recognize RNA lacking a 5'-triphosphate. The protein is ATP-dependent RNA helicase DHX58 of Homo sapiens (Human).